We begin with the raw amino-acid sequence, 152 residues long: ALK and LTK ligand 2 (152 aa).

The N-terminal stretch at Met-1–Gly-24 is a signal peptide. Intrachain disulfides connect Cys-111–Cys-147 and Cys-125–Cys-134.

Belongs to the ALKAL family. As to quaternary structure, homodimer; interchain disulfide bond is not required for homodimerization. Widely expressed with highest levels in adrenal gland and modest levels in pancreas, testis and uterus.

The protein resides in the secreted. Its subcellular location is the cell membrane. Its function is as follows. Cytokine that acts as a physiological ligand for receptor tyrosine kinases LTK and ALK, leading to their activation. Cytokine-binding is sufficient to activate LTK. In contrast, ALKAL2-driven activation of ALK is coupled with heparin-binding to ALK. Stimulation of ALK signaling is involved in neural development and regulation of energy expenditure. The sequence is that of ALK and LTK ligand 2 from Homo sapiens (Human).